The chain runs to 312 residues: tRNA uridine(34) hydroxylase (312 aa).

Residues 123–217 (SDPEVLLIDT…YLEEVPQEQS (95 aa)) enclose the Rhodanese domain. Cys-177 acts as the Cysteine persulfide intermediate in catalysis. Basic and acidic residues predominate over residues 282–293 (ARERQKQIELAR). The interval 282–312 (ARERQKQIELARQRNQPHPLGRDPRQSTLEN) is disordered.

Belongs to the TrhO family.

It catalyses the reaction uridine(34) in tRNA + AH2 + O2 = 5-hydroxyuridine(34) in tRNA + A + H2O. Functionally, catalyzes oxygen-dependent 5-hydroxyuridine (ho5U) modification at position 34 in tRNAs. This is tRNA uridine(34) hydroxylase from Pseudomonas paraeruginosa (strain DSM 24068 / PA7) (Pseudomonas aeruginosa (strain PA7)).